Reading from the N-terminus, the 282-residue chain is Elongation factor Ts (282 aa).

Positions 80–83 (TDFV) are involved in Mg(2+) ion dislocation from EF-Tu.

The protein belongs to the EF-Ts family.

The protein localises to the cytoplasm. Functionally, associates with the EF-Tu.GDP complex and induces the exchange of GDP to GTP. It remains bound to the aminoacyl-tRNA.EF-Tu.GTP complex up to the GTP hydrolysis stage on the ribosome. The sequence is that of Elongation factor Ts from Chlamydia caviae (strain ATCC VR-813 / DSM 19441 / 03DC25 / GPIC) (Chlamydophila caviae).